A 123-amino-acid chain; its full sequence is Large ribosomal subunit protein bL12 (123 aa).

Belongs to the bacterial ribosomal protein bL12 family. As to quaternary structure, homodimer. Part of the ribosomal stalk of the 50S ribosomal subunit. Forms a multimeric L10(L12)X complex, where L10 forms an elongated spine to which 2 to 4 L12 dimers bind in a sequential fashion. Binds GTP-bound translation factors.

Forms part of the ribosomal stalk which helps the ribosome interact with GTP-bound translation factors. Is thus essential for accurate translation. The protein is Large ribosomal subunit protein bL12 of Desulfotalea psychrophila (strain LSv54 / DSM 12343).